Reading from the N-terminus, the 70-residue chain is Protein SlyX homolog (70 aa).

It belongs to the SlyX family.

The chain is Protein SlyX homolog from Shewanella frigidimarina (strain NCIMB 400).